Here is a 294-residue protein sequence, read N- to C-terminus: UDP-3-O-acyl-N-acetylglucosamine deacetylase (294 aa).

Zn(2+) is bound by residues His-75, His-232, and Asp-236. The Proton donor role is filled by His-259.

Belongs to the LpxC family. Requires Zn(2+) as cofactor.

The enzyme catalyses a UDP-3-O-[(3R)-3-hydroxyacyl]-N-acetyl-alpha-D-glucosamine + H2O = a UDP-3-O-[(3R)-3-hydroxyacyl]-alpha-D-glucosamine + acetate. The protein operates within glycolipid biosynthesis; lipid IV(A) biosynthesis; lipid IV(A) from (3R)-3-hydroxytetradecanoyl-[acyl-carrier-protein] and UDP-N-acetyl-alpha-D-glucosamine: step 2/6. Its function is as follows. Catalyzes the hydrolysis of UDP-3-O-myristoyl-N-acetylglucosamine to form UDP-3-O-myristoylglucosamine and acetate, the committed step in lipid A biosynthesis. The chain is UDP-3-O-acyl-N-acetylglucosamine deacetylase from Sulfurimonas denitrificans (strain ATCC 33889 / DSM 1251) (Thiomicrospira denitrificans (strain ATCC 33889 / DSM 1251)).